The following is a 325-amino-acid chain: Probable 4-hydroxy-tetrahydrodipicolinate reductase 2, chloroplastic (325 aa).

The N-terminal 32 residues, 1–32 (MLSLRPPCTLSPAPWRRRRTLHGAAGTPQRVS), are a transit peptide targeting the chloroplast. Residues 57–62 (GCTGKM), 149–151 (GTT), and 172–175 (SPQM) each bind NAD(+). The active-site Proton donor/acceptor is H208. K212 functions as the Proton donor in the catalytic mechanism. 217–218 (GT) is a (S)-2,3,4,5-tetrahydrodipicolinate binding site.

The protein belongs to the DapB family.

It localises to the plastid. The protein localises to the chloroplast. The enzyme catalyses (S)-2,3,4,5-tetrahydrodipicolinate + NAD(+) + H2O = (2S,4S)-4-hydroxy-2,3,4,5-tetrahydrodipicolinate + NADH + H(+). It carries out the reaction (S)-2,3,4,5-tetrahydrodipicolinate + NADP(+) + H2O = (2S,4S)-4-hydroxy-2,3,4,5-tetrahydrodipicolinate + NADPH + H(+). Its pathway is amino-acid biosynthesis; L-lysine biosynthesis via DAP pathway; (S)-tetrahydrodipicolinate from L-aspartate: step 4/4. Its function is as follows. Catalyzes the conversion of 4-hydroxy-tetrahydrodipicolinate (HTPA) to tetrahydrodipicolinate. The protein is Probable 4-hydroxy-tetrahydrodipicolinate reductase 2, chloroplastic (DAPB2) of Oryza sativa subsp. japonica (Rice).